The sequence spans 165 residues: MPLNLQDKKAIVDEVKEIAKGALSAVVADTRGVTVAKMTGLRKAAREAGVYMRVVRNTLMRRVVFSTDFECLQDTFVGPTLIAFSTEHPGAAARLFKEFAKLNKEFEIKAAAFEGTLIPVSDIDRLATLPTYEEAIARLMATLKEASVGKLVRTLAALKAKREAI.

Belongs to the universal ribosomal protein uL10 family. Part of the ribosomal stalk of the 50S ribosomal subunit. The N-terminus interacts with L11 and the large rRNA to form the base of the stalk. The C-terminus forms an elongated spine to which L12 dimers bind in a sequential fashion forming a multimeric L10(L12)X complex.

Forms part of the ribosomal stalk, playing a central role in the interaction of the ribosome with GTP-bound translation factors. This chain is Large ribosomal subunit protein uL10, found in Hamiltonella defensa subsp. Acyrthosiphon pisum (strain 5AT).